The sequence spans 555 residues: Zinc transporter ZIP5 (555 aa).

The Extracellular segment spans residues methionine 1–glycine 242. Residues lysine 108 to serine 148 are disordered. A helical membrane pass occupies residues phenylalanine 243–valine 263. The Cytoplasmic portion of the chain corresponds to alanine 264–alanine 314. Residues valine 315–leucine 335 traverse the membrane as a helical segment. Residues glycine 336–leucine 408 are Extracellular-facing. Residues threonine 363–histidine 374 are compositionally biased toward polar residues. The segment at threonine 363–proline 383 is disordered. A helical transmembrane segment spans residues alanine 409–phenylalanine 429. Residues cysteine 430–arginine 452 lie on the Cytoplasmic side of the membrane. The helical transmembrane segment at leucine 453–alanine 473 threads the bilayer. Residues leucine 474 to serine 482 are Extracellular-facing. A helical membrane pass occupies residues proline 483 to proline 503. The Cytoplasmic portion of the chain corresponds to glutamate 504–arginine 518. A helical transmembrane segment spans residues phenylalanine 519–phenylalanine 539. Residues glutamate 540–asparagine 555 are Extracellular-facing.

The protein belongs to the ZIP transporter (TC 2.A.5) family.

Its subcellular location is the basolateral cell membrane. The enzyme catalyses Zn(2+)(in) = Zn(2+)(out). Uniporter that transports zinc(2+) into polarized cells of enterocytes, pancreatic acinar and endoderm cells across the basolateral membrane and participates, notably, in zinc excretion from the intestine by the uptake of zinc from the blood into the intestine. The transport mechanism is temperature- and concentration-dependent and saturable. Mediates zinc homeostasis that is essential for venous angiogenesis. The sequence is that of Zinc transporter ZIP5 (slc39a5) from Danio rerio (Zebrafish).